The chain runs to 102 residues: Putative pterin-4-alpha-carbinolamine dehydratase (102 aa).

This sequence belongs to the pterin-4-alpha-carbinolamine dehydratase family.

The catalysed reaction is (4aS,6R)-4a-hydroxy-L-erythro-5,6,7,8-tetrahydrobiopterin = (6R)-L-erythro-6,7-dihydrobiopterin + H2O. In Burkholderia vietnamiensis (strain G4 / LMG 22486) (Burkholderia cepacia (strain R1808)), this protein is Putative pterin-4-alpha-carbinolamine dehydratase.